The chain runs to 229 residues: Peptidase E (229 aa).

Catalysis depends on charge relay system residues serine 120, aspartate 135, and histidine 157.

Belongs to the peptidase S51 family.

Its subcellular location is the cytoplasm. The catalysed reaction is Dipeptidase E catalyzes the hydrolysis of dipeptides Asp-|-Xaa. It does not act on peptides with N-terminal Glu, Asn or Gln, nor does it cleave isoaspartyl peptides.. Functionally, hydrolyzes dipeptides containing N-terminal aspartate residues. May play a role in allowing the cell to use peptide aspartate to spare carbon otherwise required for the synthesis of the aspartate family of amino acids. The sequence is that of Peptidase E from Shigella sonnei (strain Ss046).